Reading from the N-terminus, the 127-residue chain is Large ribosomal subunit protein bL12 (127 aa).

The segment at 93 to 127 (LVDEAPNPVSEGVSREEADDLKAQIEDAGGEVELQ) is disordered. Over residues 105 to 117 (VSREEADDLKAQI) the composition is skewed to basic and acidic residues.

The protein belongs to the bacterial ribosomal protein bL12 family. In terms of assembly, homodimer. Part of the ribosomal stalk of the 50S ribosomal subunit. Forms a multimeric L10(L12)X complex, where L10 forms an elongated spine to which 2 to 4 L12 dimers bind in a sequential fashion. Binds GTP-bound translation factors.

Functionally, forms part of the ribosomal stalk which helps the ribosome interact with GTP-bound translation factors. Is thus essential for accurate translation. The polypeptide is Large ribosomal subunit protein bL12 (Salinibacter ruber (strain DSM 13855 / M31)).